A 316-amino-acid polypeptide reads, in one-letter code: Arginase-1 (316 aa).

Residues 1–26 (MAKERHSVGVIGAPFSKGQPRRGVEE) form a disordered region. Mn(2+)-binding residues include H101, D124, H126, and D128. Residues 126–130 (HADIN), 137–139 (CGN), and D183 contribute to the substrate site. Residues D232 and D234 each coordinate Mn(2+). T246 contributes to the substrate binding site.

This sequence belongs to the arginase family. As to quaternary structure, homotrimer. It depends on Mn(2+) as a cofactor. In terms of tissue distribution, strongest expression in liver.

It carries out the reaction L-arginine + H2O = urea + L-ornithine. The protein operates within nitrogen metabolism; urea cycle; L-ornithine and urea from L-arginine: step 1/1. The chain is Arginase-1 (arg1) from Xenopus laevis (African clawed frog).